We begin with the raw amino-acid sequence, 873 residues long: DNA mismatch repair protein MutS (873 aa).

Residue 625-632 (GPNMGGKS) participates in ATP binding.

It belongs to the DNA mismatch repair MutS family.

In terms of biological role, this protein is involved in the repair of mismatches in DNA. It is possible that it carries out the mismatch recognition step. This protein has a weak ATPase activity. The polypeptide is DNA mismatch repair protein MutS (Xanthomonas euvesicatoria pv. vesicatoria (strain 85-10) (Xanthomonas campestris pv. vesicatoria)).